A 325-amino-acid chain; its full sequence is tRNA U34 carboxymethyltransferase (325 aa).

Carboxy-S-adenosyl-L-methionine contacts are provided by residues Lys91, Trp105, Lys110, Gly130, 152–154, 181–182, Met197, Tyr201, and Arg316; these read DPS and ME.

The protein belongs to the class I-like SAM-binding methyltransferase superfamily. CmoB family. As to quaternary structure, homotetramer.

The catalysed reaction is carboxy-S-adenosyl-L-methionine + 5-hydroxyuridine(34) in tRNA = 5-carboxymethoxyuridine(34) in tRNA + S-adenosyl-L-homocysteine + H(+). Catalyzes carboxymethyl transfer from carboxy-S-adenosyl-L-methionine (Cx-SAM) to 5-hydroxyuridine (ho5U) to form 5-carboxymethoxyuridine (cmo5U) at position 34 in tRNAs. The protein is tRNA U34 carboxymethyltransferase of Saccharophagus degradans (strain 2-40 / ATCC 43961 / DSM 17024).